Consider the following 313-residue polypeptide: Olfactory receptor 1M1 (313 aa).

At 1 to 25 (MEPQNHTSASEFILLGLSEKPDHDP) the chain is on the extracellular side. An N-linked (GlcNAc...) asparagine glycan is attached at Asn5. Residues 26–46 (VLFSLFLCMYMITVVGNLLII) form a helical membrane-spanning segment. Over 47–54 (LAISFDSH) the chain is Cytoplasmic. The chain crosses the membrane as a helical span at residues 55-75 (LHTPMYFFLANLSLVDFCLAT). Residues 76–97 (NTVPKMLVNIQTRNKSISYPCC) lie on the Extracellular side of the membrane. The N-linked (GlcNAc...) asparagine glycan is linked to Asn89. Cys97 and Cys179 are disulfide-bonded. The chain crosses the membrane as a helical span at residues 98–118 (LTQMYFFHFFGIMDSVLIAVM). At 119-142 (AYDRFVAICHPLHYSTIMSPRLCG) the chain is on the cytoplasmic side. A helical transmembrane segment spans residues 143–163 (LLVGVPWVYSCFISLTHILLM). The Extracellular portion of the chain corresponds to 164–196 (ARLVFCGKNELPHYFCDLTPLLRLSCTDTTVNK). Residues 197–217 (IFVLIVAGMVIATPFVCILAS) form a helical membrane-spanning segment. Residues 218 to 244 (YARIIVAIMKVPSAGGRKKAFSTCSSH) are Cytoplasmic-facing. The helical transmembrane segment at 245–265 (LSVVALFYGTTIGVYLCPSSV) threads the bilayer. The Extracellular segment spans residues 266–274 (RTAVKEKAS). A helical membrane pass occupies residues 275 to 292 (AVMYTAVTPMLNPFIYSL). Topologically, residues 293 to 313 (RNRDLKGALKKIINRKISTSS) are cytoplasmic.

The protein belongs to the G-protein coupled receptor 1 family. As to expression, expressed in testis.

The protein localises to the cell membrane. Its function is as follows. Odorant receptor. This Mus musculus (Mouse) protein is Olfactory receptor 1M1.